A 130-amino-acid polypeptide reads, in one-letter code: Small ribosomal subunit protein uS11 (130 aa).

Belongs to the universal ribosomal protein uS11 family. In terms of assembly, part of the 30S ribosomal subunit. Interacts with proteins S7 and S18. Binds to IF-3.

Its function is as follows. Located on the platform of the 30S subunit, it bridges several disparate RNA helices of the 16S rRNA. Forms part of the Shine-Dalgarno cleft in the 70S ribosome. The sequence is that of Small ribosomal subunit protein uS11 from Psychrobacter sp. (strain PRwf-1).